Consider the following 758-residue polypeptide: 52 kDa repressor of the inhibitor of the protein kinase (758 aa).

Residues 1–86 (MPNFCAAPNC…LRDNAIPTIF (86 aa)) form a THAP-type zinc finger. Positions 116–141 (QKKIEETSEQEQETNTNAQNPSAEAV) are disordered. Serine 563 is subject to Phosphoserine.

As to quaternary structure, interacts with DNAJC3, probably sequestring it.

In terms of biological role, upstream regulator of interferon-induced serine/threonine protein kinase R (PKR). May block the PKR-inhibitory function of DNAJC3, resulting in restoration of kinase activity and suppression of cell growth. The sequence is that of 52 kDa repressor of the inhibitor of the protein kinase from Mus musculus (Mouse).